The primary structure comprises 553 residues: Zinc finger protein 426 (553 aa).

Residues Val40–Gln111 form the KRAB domain. 11 C2H2-type zinc fingers span residues Phe222–His244, His277–His299, Tyr305–His327, Tyr333–His355, Tyr361–His383, Phe389–His411, Cys417–His439, Tyr445–His467, Tyr473–His495, Tyr501–His525, and Tyr531–His553.

It is found in the nucleus. Functionally, may be involved in transcriptional regulation. The sequence is that of Zinc finger protein 426 (Znf426) from Rattus norvegicus (Rat).